Reading from the N-terminus, the 220-residue chain is MMQELKILNEKRAEIYWWLSSLFFKELSEQDIARYHSAEVRTFLSGLADEQSLSREVKHLVEALNRLQDRQDAQLELAADFCDLFLKSDRDSALPYASVYTDQGLLNGKPAQQMRELLSAHGVKVEQNLNEPEDHLAIQLDFLAHLAISANQIEHSAQLSLALQAQSDFISQHLLTWLPAFAERCTQFDAFGLYSAAARLALAFIQQDKHCLDELIQETH.

It belongs to the TorD/DmsD family. TorD subfamily.

The protein resides in the cytoplasm. Its function is as follows. Involved in the biogenesis of TorA. Acts on TorA before the insertion of the molybdenum cofactor and, as a result, probably favors a conformation of the apoenzyme that is competent for acquiring the cofactor. The chain is Chaperone protein TorD from Vibrio cholerae serotype O1 (strain ATCC 39541 / Classical Ogawa 395 / O395).